The primary structure comprises 151 residues: UPF0178 protein Shal_3046 (151 aa).

It belongs to the UPF0178 family.

The protein is UPF0178 protein Shal_3046 of Shewanella halifaxensis (strain HAW-EB4).